The following is a 975-amino-acid chain: Leucine-zipper-like transcriptional regulator 1 homolog (975 aa).

The span at 16–32 (RGGGGGGCGGGGAGGSA) shows a compositional bias: gly residues. Disordered stretches follow at residues 16–41 (RGGG…TSGS) and 158–186 (MSSS…SCSS). Low complexity predominate over residues 174–186 (ASSSHPPGSSCSS). Kelch repeat units lie at residues 263-312 (AMFV…VAGS), 314-369 (MFIF…VYDN), 370-417 (KMWI…PVAV), 421-467 (AMYV…PSRR), 478-524 (FLYV…FHAS), and 530-581 (AMYI…FIVG). 2 consecutive BTB domains span residues 574 to 670 (CDIQ…DLKD) and 801 to 870 (CDIS…KMPP).

Belongs to the LZTR1 family. In terms of assembly, component of some BCR (BTB-CUL3-RBX1) E3 ubiquitin-protein ligase complex. Expressed in Rdl-expressing neurons of the mushroom body, the neurons projecting to the LC9 optic glomerulus and in a neuronal cluster near the subesophageal ganglion (at protein level).

Its pathway is protein modification; protein ubiquitination. Functionally, inhibitor of Ras signaling. Acts as a substrate-specific adapter of a BCR (BTB-CUL3-RBX1) E3 ubiquitin-protein ligase complex that mediates ubiquitination of Ras. Together with Nf1, plays an important role for normal sleep behavior, mainly during the night. Might affect sleep by modulating GABA signaling in Rdl-expressing neurons. Might play a role in the regulation of brain glycogen metabolism and organismal levels of triglycerides. The protein is Leucine-zipper-like transcriptional regulator 1 homolog of Drosophila melanogaster (Fruit fly).